Here is a 520-residue protein sequence, read N- to C-terminus: Putative cytochrome P450 CYP13A5 (520 aa).

Heme is bound at residue Cys464.

This sequence belongs to the cytochrome P450 family. The cofactor is heme.

In terms of biological role, cytochromes P450 are a group of heme-thiolate monooxygenases. They oxidize a variety of structurally unrelated compounds, including steroids, fatty acids, and xenobiotics. In Caenorhabditis elegans, this protein is Putative cytochrome P450 CYP13A5 (cyp-13A5).